Consider the following 54-residue polypeptide: Large ribosomal subunit protein bL33B (54 aa).

This sequence belongs to the bacterial ribosomal protein bL33 family.

The chain is Large ribosomal subunit protein bL33B from Mycobacterium sp. (strain KMS).